The sequence spans 339 residues: Ketol-acid reductoisomerase (NADP(+)) (339 aa).

In terms of domain architecture, KARI N-terminal Rossmann spans 1–182 (MRVYYDRDAD…GGGRAGIIET (182 aa)). NADP(+) contacts are provided by residues 24-27 (YGSQ), Arg-48, Ser-51, Ser-53, and 83-86 (DELQ). The active site involves His-108. Gly-134 is an NADP(+) binding site. The KARI C-terminal knotted domain occupies 183 to 328 (TFREECETDL…AKLRDMMPWI (146 aa)). Residues Asp-191, Glu-195, Glu-227, and Glu-231 each coordinate Mg(2+). Residue Ser-252 coordinates substrate.

It belongs to the ketol-acid reductoisomerase family. It depends on Mg(2+) as a cofactor.

It carries out the reaction (2R)-2,3-dihydroxy-3-methylbutanoate + NADP(+) = (2S)-2-acetolactate + NADPH + H(+). The catalysed reaction is (2R,3R)-2,3-dihydroxy-3-methylpentanoate + NADP(+) = (S)-2-ethyl-2-hydroxy-3-oxobutanoate + NADPH + H(+). It functions in the pathway amino-acid biosynthesis; L-isoleucine biosynthesis; L-isoleucine from 2-oxobutanoate: step 2/4. The protein operates within amino-acid biosynthesis; L-valine biosynthesis; L-valine from pyruvate: step 2/4. Involved in the biosynthesis of branched-chain amino acids (BCAA). Catalyzes an alkyl-migration followed by a ketol-acid reduction of (S)-2-acetolactate (S2AL) to yield (R)-2,3-dihydroxy-isovalerate. In the isomerase reaction, S2AL is rearranged via a Mg-dependent methyl migration to produce 3-hydroxy-3-methyl-2-ketobutyrate (HMKB). In the reductase reaction, this 2-ketoacid undergoes a metal-dependent reduction by NADPH to yield (R)-2,3-dihydroxy-isovalerate. This chain is Ketol-acid reductoisomerase (NADP(+)), found in Rhodopseudomonas palustris (strain ATCC BAA-98 / CGA009).